The sequence spans 743 residues: FHF complex subunit HOOK-interacting protein 2B (743 aa).

Residues Cys-186–Ser-219 are disordered. A compositionally biased stretch (basic and acidic residues) spans Thr-196–His-206.

The protein belongs to the FHIP family. Expressed in liver.

Functionally, able to activate MAPK/ERK and TGFB signaling pathways. May regulate the activity of genes involved in intestinal barrier function and immunoprotective inflammation. May play a role in cell proliferation. The protein is FHF complex subunit HOOK-interacting protein 2B of Homo sapiens (Human).